A 152-amino-acid polypeptide reads, in one-letter code: UPF0178 protein swp_1285 (152 aa).

Belongs to the UPF0178 family.

In Shewanella piezotolerans (strain WP3 / JCM 13877), this protein is UPF0178 protein swp_1285.